Consider the following 182-residue polypeptide: Inner membrane assembly complex subunit 17 (182 aa).

The transit peptide at 1-45 (MLKRRSNALITLSRTKLFPITTVAYYHRRLLNQQRRAVSTSPKKE) directs the protein to the mitochondrion. Residues 46 to 107 (IKSLEDLANL…EIPVKRFIRP (62 aa)) are Mitochondrial matrix-facing. Residues 108 to 127 (LWMFILMGSSVYLLLHFSWW) traverse the membrane as a helical segment. The stretch at 128 to 158 (KLEHEERESQLKKEVEILEHQLNELIVQDKT) forms a coiled coil. Topologically, residues 128 to 182 (KLEHEERESQLKKEVEILEHQLNELIVQDKTHNTSRGKGSNESTHMKPWYRRWFW) are mitochondrial intermembrane.

This sequence belongs to the INA17 family. Component of the inner membrane assembly (INA) complex, composed of INA17 and INA22. Interacts with a subset of F(1)F(0)-ATP synthase subunits of the F(1)-domain and the peripheral stalk.

It localises to the mitochondrion inner membrane. Its function is as follows. Component of the INA complex (INAC) that promotes the biogenesis of mitochondrial F(1)F(0)-ATP synthase. INAC facilitates the assembly of the peripheral stalk and promotes the assembly of the catalytic F(1)-domain with the membrane-embedded F(0)-domain. The chain is Inner membrane assembly complex subunit 17 from Saccharomyces cerevisiae (strain RM11-1a) (Baker's yeast).